Reading from the N-terminus, the 399-residue chain is MSGAEEAGGGGPAAGPAGAVPAGVGVGAGPGAAAGPAAAALGEAAGPGIPDEAALAGARQLQEAAGDPDAPPKKRLRAAEAAEAAAAAVAAGSGKLEERLYSVLCCTVCLDLPKASVYQCTNGHLMCAGCFIHLLADARLKEEQATCPNCRCEISKSLCCRNLAVEKAVSELPSECGFCLRQFPRSLLERHQKEECQDRVTQCKYKRIGCPWHGPFHELTVHEAACAHPTKTGNELMEILDEMDQSHRKEMQLYNSIFSLLSFEKIGYTEVQFRPYRTDDFITRLYYETPRFTVLNQTWVLKARVNDSERNPNLSCKRTLSFQLLLKSKVTAPLECSFLLLKGPYDDVRISPVIYHFVFTNESNETDYVPLPIIDSVECNKLLAAKNINLRLFLFQIQK.

The segment covering 1–13 (MSGAEEAGGGGPA) has biased composition (gly residues). Positions 1 to 21 (MSGAEEAGGGGPAAGPAGAVP) are disordered. Residues 106–151 (CTVCLDLPKASVYQCTNGHLMCAGCFIHLLADARLKEEQATCPNCR) form an RING-type; degenerate zinc finger. Residues 152 to 210 (CEISKSLCCRNLAVEKAVSELPSECGFCLRQFPRSLLERHQKEECQDRVTQCKYKRIGC) form a TRAF-type zinc finger.

This sequence belongs to the ZFTRAF1 family. Interacts with LGALS3. In terms of tissue distribution, expressed in heart, brain, liver, testis and kidney.

Its subcellular location is the cytoplasm. It localises to the perinuclear region. This chain is Zinc finger TRAF-type-containing protein 1, found in Mus musculus (Mouse).